The following is a 442-amino-acid chain: Trigger factor (442 aa).

The PPIase FKBP-type domain maps to 163 to 248; sequence YDRVTINYCI…IIKIEKKQEL (86 aa).

The protein belongs to the FKBP-type PPIase family. Tig subfamily.

The protein localises to the cytoplasm. It catalyses the reaction [protein]-peptidylproline (omega=180) = [protein]-peptidylproline (omega=0). Functionally, involved in protein export. Acts as a chaperone by maintaining the newly synthesized protein in an open conformation. Functions as a peptidyl-prolyl cis-trans isomerase. The sequence is that of Trigger factor from Buchnera aphidicola subsp. Acyrthosiphon pisum (strain Tuc7).